We begin with the raw amino-acid sequence, 426 residues long: Putative FBD-associated F-box protein At5g53635 (426 aa).

In terms of domain architecture, F-box spans methionine 1–asparagine 45. Positions methionine 353–histidine 405 constitute an FBD domain.

This Arabidopsis thaliana (Mouse-ear cress) protein is Putative FBD-associated F-box protein At5g53635.